The chain runs to 42 residues: Photosystem I reaction center subunit IX (42 aa).

The chain crosses the membrane as a helical span at residues 7 to 27 (YLSVAPVLSTLWFGALAGLLI).

This sequence belongs to the PsaJ family.

The protein resides in the plastid. Its subcellular location is the chloroplast thylakoid membrane. May help in the organization of the PsaE and PsaF subunits. In Agrostis stolonifera (Creeping bentgrass), this protein is Photosystem I reaction center subunit IX.